Consider the following 399-residue polypeptide: MAEGIDRKMDDRMEFTTSADVTVAPTFQDMHLKENLLRGIYAYGYESPSAVQSRAIVQICKGRDTIAQAQSGTGKTATFSISMLQVIDTAVRETQALVLSPTRELATQIQSVVMALGDYMNVQCHACIGGTNVGEDIRKLDYGQHIVSGTPGRVADMIRRRNLRTRHIKMLVLDEADELLNRGFREQIYDVYRYLPPATQVVVVSATLPYDVLDMTTKFMTDPVRILVKRDELTLEGLKQYFIAVEKEEWKFDTLCDLYDTLTITQAVIFCNTRRKVDWLTDKMREANFTVSSMHGEMPQKERDSIMQDFRQGNSRVLISTDVWARGIDVQQVSLVINYDLPVNRENYIHRIGRSGRFGRKGVAINFVTSEDVRILRDIELYYSTQIDEMPMNVADLLT.

Residues 25–53 (PTFQDMHLKENLLRGIYAYGYESPSAVQS) carry the Q motif motif. One can recognise a Helicase ATP-binding domain in the interval 56–226 (IVQICKGRDT…TKFMTDPVRI (171 aa)). 69–76 (AQSGTGKT) lines the ATP pocket. The short motif at 174 to 177 (DEAD) is the DEAD box element. In terms of domain architecture, Helicase C-terminal spans 237–398 (GLKQYFIAVE…EMPMNVADLL (162 aa)).

This sequence belongs to the DEAD box helicase family. DDX48/FAL1 subfamily.

Its subcellular location is the nucleus. The protein localises to the nucleolus. The catalysed reaction is ATP + H2O = ADP + phosphate + H(+). ATP-dependent RNA helicase involved in 40S ribosomal subunit biogenesis. Required for the processing and cleavage of 35S pre-rRNA at sites A0, A1, and A2, leading to mature 18S rRNA. This chain is ATP-dependent RNA helicase fal1 (fal1), found in Sclerotinia sclerotiorum (strain ATCC 18683 / 1980 / Ss-1) (White mold).